Consider the following 509-residue polypeptide: Cytochrome P450 monooxygenase LUC2 (509 aa).

A helical transmembrane segment spans residues 30–50 (TKVLVTFLTIVIIAPRVFTVI). C456 serves as a coordination point for heme.

It belongs to the cytochrome P450 family. It depends on heme as a cofactor.

It localises to the membrane. The protein operates within mycotoxin biosynthesis. Cytochrome P450 monooxygenase; part of the gene cluster that mediates the biosynthesis of the mycotoxin lucilactaene and the lucilactaene-related compound NG-391 that act as cell cycle inhibitors with potent growth inhibitory activity against malarial parasites, moderate growth inhibitory activity against cancer cells, and no activity against bacteria and fungi. Within the pathway, LUC2 performs C-20 methyl group hydroxylation of several intermediates. LUC2 does not perform the full oxidation of the C-20 methyl group into carboxylic acid, which is a prerequisite for the final methylation step. The pathway begins with the hybrid PKS-NRPS synthetase LUC5 which is responsible for the condensation of one acetyl-coenzyme A (CoA) unit with six malonyl-CoA units and the amide linkage of the arising heptaketide and homoserine, subsequently releasing the first intermediate prelucilactaene B. Both the cytochrome P450 monooxygenase LUC2 and the hydrolase LUC6 function in parallel in modification of prelucilactaene B. LUC6 may catalyze the 2-pyrrolidone ring formation to form prelucilactaene C from prelucilactaene B, followed by C-15 hydroxylation by the same enzyme to give prelucilactaene D, which is then converted to prelucilactaene E by epoxidation, and finally to prelucilactaene F by cyclization. Prelucilactane D, prelucilactaene E, and prelucilactaene F can be converted to dihydrolucilactaene, NG391, and lucilactaene, respectively, via C-20 methyl group hydroxylation by the cytochrome P450 monooxygenase LUC2. However, LUC2, unlike FUS8 in fusarin C biosynthesis, is not enough for the full oxidation of the C-20 methyl group into carboxylic acid, which is a prerequisite for the final methylation step. The aldehyde dehydrogenase LUC3 is involved in the biosynthesis by further oxidation of the C-20 alcoholic analog prelucilactaene G into a carboxylic derivative. This unidentified carboxylic derivative may be converted to demethyllucilactaene. As the last step, the methyltransferase LUC1 methylates the hydroxyl group at C-21 of demethyllucilactaene to generate lucilactaene. The polypeptide is Cytochrome P450 monooxygenase LUC2 (Fusarium sp).